The sequence spans 696 residues: ATP-dependent zinc metalloprotease FtsH (696 aa).

The Cytoplasmic portion of the chain corresponds to 1–29; the sequence is MWLQVTNCSTLHSSLSYCGANTLSDMAKN. The helical transmembrane segment at 30–50 threads the bilayer; it reads LILWLVIAVVLMSVFQSFGPS. Residues 51–124 are Periplasmic-facing; that stretch reads DSAGRQVDYT…LGTPPEEPSL (74 aa). Residues 125-145 form a helical membrane-spanning segment; the sequence is LASIFISWFPMLLLIGVWVFF. The Cytoplasmic portion of the chain corresponds to 146–696; sequence MRQMQGGGGG…APKEDDKPQA (551 aa). Residue 219 to 226 coordinates ATP; the sequence is GPPGTGKT. Zn(2+) is bound at residue H441. E442 is a catalytic residue. 2 residues coordinate Zn(2+): H445 and D519. The disordered stretch occupies residues 627 to 696; the sequence is RAPKGWGDTD…APKEDDKPQA (70 aa). The span at 650-696 shows a compositional bias: basic and acidic residues; that stretch reads PEAKTESAPEAKAEANVETEEKPVAADSEELKPKAEQAPKEDDKPQA.

In the central section; belongs to the AAA ATPase family. It in the C-terminal section; belongs to the peptidase M41 family. Homohexamer. Requires Zn(2+) as cofactor.

The protein localises to the cell inner membrane. Acts as a processive, ATP-dependent zinc metallopeptidase for both cytoplasmic and membrane proteins. Plays a role in the quality control of integral membrane proteins. The sequence is that of ATP-dependent zinc metalloprotease FtsH from Photobacterium profundum (strain SS9).